A 228-amino-acid polypeptide reads, in one-letter code: Ribose-5-phosphate isomerase A (228 aa).

Residues Thr29 to Thr32, Asp85 to Asp88, and Lys98 to Gly101 contribute to the substrate site. Glu107 serves as the catalytic Proton acceptor. Substrate is bound at residue Lys125.

Belongs to the ribose 5-phosphate isomerase family. As to quaternary structure, homodimer.

The catalysed reaction is aldehydo-D-ribose 5-phosphate = D-ribulose 5-phosphate. It participates in carbohydrate degradation; pentose phosphate pathway; D-ribose 5-phosphate from D-ribulose 5-phosphate (non-oxidative stage): step 1/1. Functionally, catalyzes the reversible conversion of ribose-5-phosphate to ribulose 5-phosphate. This chain is Ribose-5-phosphate isomerase A, found in Staphylococcus aureus (strain MRSA252).